The sequence spans 345 residues: Proto-oncogene serine/threonine-protein kinase mos (345 aa).

The Protein kinase domain occupies Val-63–Leu-344. ATP is bound by residues Leu-69–Val-77 and Lys-90. Asp-202 (proton acceptor) is an active-site residue.

It belongs to the protein kinase superfamily. Ser/Thr protein kinase family. As to quaternary structure, interacts with MAP2K1/MEK1. Restricted to gonadal tissues.

Its subcellular location is the cytoplasm. The catalysed reaction is L-seryl-[protein] + ATP = O-phospho-L-seryl-[protein] + ADP + H(+). It catalyses the reaction L-threonyl-[protein] + ATP = O-phospho-L-threonyl-[protein] + ADP + H(+). Functionally, serine/threonine kinase involved in the regulation of MAPK signaling. Is an activator of the ERK1/2 signaling cascade playing an essential role in the stimulation of oocyte maturation. In Sus scrofa (Pig), this protein is Proto-oncogene serine/threonine-protein kinase mos.